The chain runs to 79 residues: Dermaseptin-S8 (79 aa).

Positions 1–22 (MDILKKSLFLVLFLGLVSLSIC) are cleaved as a signal peptide. A propeptide spanning residues 23–45 (EEEKRENEDEEKQEDDEQSEMKR) is cleaved from the precursor. Q76 is subject to Glutamine amide. Residues 78–79 (AQ) constitute a propeptide that is removed on maturation.

Belongs to the frog skin active peptide (FSAP) family. Dermaseptin subfamily. As to expression, expressed by the skin glands.

It localises to the secreted. Functionally, potent antimicrobial peptide with activity against bacteria, fungi and protozoa. Probably acts by disturbing membrane functions with its amphipathic structure. The sequence is that of Dermaseptin-S8 from Phyllomedusa sauvagei (Sauvage's leaf frog).